The sequence spans 109 residues: Fluoride-specific ion channel FluC 1 (109 aa).

A run of 3 helical transmembrane segments spans residues 21-41, 52-72, and 83-103; these read FYFK…GFFI, ILFS…HFLY, and LFIY…IGFQ.

It belongs to the fluoride channel Fluc/FEX (TC 1.A.43) family.

Its subcellular location is the cell inner membrane. The enzyme catalyses fluoride(in) = fluoride(out). In terms of biological role, fluoride-specific ion channel. Important for reducing fluoride concentration in the cell, thus reducing its toxicity. This is Fluoride-specific ion channel FluC 1 from Prochlorococcus marinus subsp. pastoris (strain CCMP1986 / NIES-2087 / MED4).